Reading from the N-terminus, the 1533-residue chain is DNA topoisomerase 2-alpha (1533 aa).

Met-1 is modified (N-acetylmethionine). The disordered stretch occupies residues 1–22 (MEVSPLQPVNENMQVNKTKKNE). Ser-4 carries the post-translational modification Phosphoserine. Residues 7–16 (QPVNENMQVN) are compositionally biased toward polar residues. Residue Lys-17 forms a Glycyl lysine isopeptide (Lys-Gly) (interchain with G-Cter in SUMO2) linkage. ATP contacts are provided by residues Asn-91, Asn-120, and 148–150 (SSN). Glycyl lysine isopeptide (Lys-Gly) (interchain with G-Cter in SUMO2) cross-links involve residues Lys-156 and Lys-157. Residue 161 to 168 (GRNGYGAK) coordinates ATP. A Glycyl lysine isopeptide (Lys-Gly) (interchain with G-Cter in SUMO2) cross-link involves residue Lys-261. A Phosphothreonine modification is found at Thr-282. The tract at residues 342–344 (KKK) is interaction with DNA. Lys-352 is covalently cross-linked (Glycyl lysine isopeptide (Lys-Gly) (interchain with G-Cter in SUMO2)). 376–378 (QTK) contacts ATP. Residues Lys-386, Lys-397, Lys-416, Lys-418, Lys-425, and Lys-440 each participate in a glycyl lysine isopeptide (Lys-Gly) (interchain with G-Cter in SUMO2) cross-link. The 118-residue stretch at 455–572 (CTLILTEGDS…SLLRHRFLEE (118 aa)) folds into the Toprim domain. Glu-461 contacts Mg(2+). Glycyl lysine isopeptide (Lys-Gly) (interchain with G-Cter in SUMO2) cross-links involve residues Lys-466, Lys-480, and Lys-529. Residues Asp-541 and Asp-543 each contribute to the Mg(2+) site. Residues Lys-584, Lys-599, Lys-614, Lys-622, Lys-625, Lys-632, Lys-639, Lys-655, Lys-662, and Lys-676 each participate in a glycyl lysine isopeptide (Lys-Gly) (interchain with G-Cter in SUMO2) cross-link. Positions 715–1171 (IPSMVDGLKP…SPSDLWKEDL (457 aa)) constitute a Topo IIA-type catalytic domain. Tyr-805 (O-(5'-phospho-DNA)-tyrosine intermediate) is an active-site residue. Residues 990–999 (KLQTSLTCNS) are interaction with DNA. Lys-1075 is covalently cross-linked (Glycyl lysine isopeptide (Lys-Gly) (interchain with G-Cter in SUMO2)). Disordered regions lie at residues 1090 to 1121 (WKEA…VADS) and 1183 to 1215 (AKEK…PSPC). Acidic residues predominate over residues 1099–1108 (DEEENEESDN). At Ser-1106 the chain carries Phosphoserine; by CK1. Residues Lys-1114, Lys-1196, and Lys-1204 each participate in a glycyl lysine isopeptide (Lys-Gly) (interchain with G-Cter in SUMO2) cross-link. Thr-1205 is subject to Phosphothreonine. At Ser-1213 the chain carries Phosphoserine. Lys-1228 participates in a covalent cross-link: Glycyl lysine isopeptide (Lys-Gly) (interchain with G-Cter in SUMO2). The disordered stretch occupies residues 1231-1533 (AEKKIKKKIK…LEESDEDDLF (303 aa)). Residue Lys-1240 forms a Glycyl lysine isopeptide (Lys-Gly) (interchain with G-Cter in SUMO1); alternate linkage. Lys-1240 participates in a covalent cross-link: Glycyl lysine isopeptide (Lys-Gly) (interchain with G-Cter in SUMO2); alternate. Thr-1244 bears the Phosphothreonine mark. Ser-1247 is modified (phosphoserine). Residues 1256-1272 (EGLKQRLEKKQKREPGT) show a composition bias toward basic and acidic residues. Residues Lys-1259, Lys-1276, Lys-1283, and Lys-1286 each participate in a glycyl lysine isopeptide (Lys-Gly) (interchain with G-Cter in SUMO2) cross-link. Ser-1295, Ser-1297, Ser-1299, and Ser-1302 each carry phosphoserine. Thr-1327 is subject to Phosphothreonine. Residues Ser-1332 and Ser-1337 each carry the phosphoserine modification. Thr-1343 is modified (phosphothreonine). 2 positions are modified to phosphoserine: Ser-1351 and Ser-1354. A compositionally biased stretch (basic and acidic residues) spans 1360-1371 (TSPKHTNKEPKP). Residues Lys-1363, Lys-1367, and Lys-1373 each participate in a glycyl lysine isopeptide (Lys-Gly) (interchain with G-Cter in SUMO2) cross-link. Ser-1374 and Ser-1377 each carry phosphoserine. Lys-1387 participates in a covalent cross-link: Glycyl lysine isopeptide (Lys-Gly) (interchain with G-Cter in SUMO2). Residues Ser-1393 and Ser-1395 each carry the phosphoserine modification. The segment covering 1409-1433 (KPVSKKNVTVKKTAAKSQSSTSTTG) has biased composition (low complexity). A Glycyl lysine isopeptide (Lys-Gly) (interchain with G-Cter in SUMO2); alternate cross-link involves residue Lys-1424. At Lys-1424 the chain carries N6-acetyllysine; alternate. The interaction with PLSCR1 stretch occupies residues 1435-1441 (KKRAAPK). Positions 1443-1455 (AKKDPDLDSDVSK) are enriched in basic and acidic residues. A Glycyl lysine isopeptide (Lys-Gly) (interchain with G-Cter in SUMO2); alternate cross-link involves residue Lys-1444. Lys-1444 carries the N6-acetyllysine; alternate modification. Residue Ser-1451 is modified to Phosphoserine. Glycyl lysine isopeptide (Lys-Gly) (interchain with G-Cter in SUMO2) cross-links involve residues Lys-1456 and Lys-1461. Residue Ser-1471 is modified to Phosphoserine. Residue Thr-1472 is modified to Phosphothreonine. 3 positions are modified to phosphoserine: Ser-1473, Ser-1476, and Ser-1478. Glycyl lysine isopeptide (Lys-Gly) (interchain with G-Cter in SUMO2) cross-links involve residues Lys-1486 and Lys-1494. The segment covering 1493–1504 (PKGESDDFHLDL) has biased composition (basic and acidic residues). Phosphoserine occurs at positions 1497 and 1527.

Belongs to the type II topoisomerase family. In terms of assembly, homodimer. Interacts with COPS5. Interacts with RECQL5; this stimulates DNA decatenation. Interacts with SETMAR; stimulates the topoisomerase activity. Interacts with DHX9; this interaction occurs in a E2 enzyme UBE2I- and RNA-dependent manner, negatively regulates DHX9-mediated double-stranded DNA and RNA duplex helicase activity and stimulates TOP2A-mediated supercoiled DNA relaxation activity. Interacts with HNRNPU (via C-terminus); this interaction protects the topoisomerase TOP2A from degradation and positively regulates the relaxation of supercoiled DNA in a RNA-dependent manner. Interacts with MCM3AP. Interacts with ERCC6. Interacts with PLSCR1. Interacts with GCNA; this interaction allows the resolution of topoisomerase II (TOP2A) DNA-protein cross-links. Interacts with POL1RA/RPA1 (via dock II) and UBTF in the context of Pol I complex; may assist Pol I transcription initiation by releasing supercoils occurring during DNA unwinding. Interacts with TPRN; TPRN interacts with a number of DNA damage response proteins, is recruited to sites of DNA damage and may play a role in DNA damage repair. The cofactor is Mg(2+). Mn(2+) is required as a cofactor. It depends on Ca(2+) as a cofactor. In terms of processing, phosphorylation has no effect on catalytic activity. However, phosphorylation at Ser-1106 by CSNK1D/CK1 promotes DNA cleavable complex formation.

It localises to the cytoplasm. The protein localises to the nucleus. Its subcellular location is the nucleoplasm. It is found in the nucleolus. It carries out the reaction ATP-dependent breakage, passage and rejoining of double-stranded DNA.. Key decatenating enzyme that alters DNA topology by binding to two double-stranded DNA molecules, generating a double-stranded break in one of the strands, passing the intact strand through the broken strand, and religating the broken strand. May play a role in regulating the period length of BMAL1 transcriptional oscillation. This chain is DNA topoisomerase 2-alpha (TOP2A), found in Sus scrofa (Pig).